The chain runs to 333 residues: MAGLKLLKSLALHDDKCWSVDVNNGGIMATGSTDRKIKLVDIRSFQIIEELDDTAHKKTVRSVAWRPHSNILAAGSFDSTVSIWGKDDDGYNDENDLETELLAIIEGHENEIKCVAWSHDGELLATCSRDKSVWIWEADEMGEEFECISVLQEHSQDVKHVIWHQSLPLLASSSYDDTVRIWKDCDDDWECCAVLNGHEGTVWSSDFEKSNSNVRLCSGSDDGTVRIWCLEDDNGEYEQEWIQESILPKAHTRAVYSVNWSPKGYIASTGSDGRLVIYKESEDGWIVECIHELTHGVYETNMVKWVEYGSKDVILLITAGDDGHVNVWKFDEN.

WD repeat units follow at residues 12-50 (LHDDKCWSVDVNNGGIMATGSTDRKIKLVDIRSFQIIEE), 55-94 (AHKKTVRSVAWRPHSNILAAGSFDSTVSIWGKDDDGYNDE), 107-146 (GHENEIKCVAWSHDGELLATCSRDKSVWIWEADEMGEEFE), 153-192 (EHSQDVKHVIWHQSLPLLASSSYDDTVRIWKDCDDDWECC), 197-238 (GHEG…GEYE), 250-288 (AHTRAVYSVNWSPKGYIASTGSDGRLVIYKESEDGWIVE), and 298-333 (YETNMVKWVEYGSKDVILLITAGDDGHVNVWKFDEN).

This sequence belongs to the WD repeat CIA1 family. In terms of assembly, interacts with NAR1.

Its subcellular location is the cytoplasm. The protein localises to the nucleus. Functionally, essential component of the cytosolic iron-sulfur (Fe/S) protein assembly machinery. Required for the maturation of extramitochondrial Fe/S proteins. This chain is Probable cytosolic iron-sulfur protein assembly protein 1, found in Kluyveromyces lactis (strain ATCC 8585 / CBS 2359 / DSM 70799 / NBRC 1267 / NRRL Y-1140 / WM37) (Yeast).